A 119-amino-acid chain; its full sequence is Toxin ICK-9 (119 aa).

The signal sequence occupies residues 1–19 (MMKLYSLVIIATLAAAAFA). Intrachain disulfides connect Cys-59/Cys-74, Cys-67/Cys-80, Cys-71/Cys-116, and Cys-73/Cys-87.

This sequence belongs to the neurotoxin 25 family. ICK-8 subfamily. In terms of tissue distribution, expressed by the venom gland.

The protein localises to the secreted. Ion channel inhibitor. This Trittame loki (Brush-footed trapdoor spider) protein is Toxin ICK-9.